The chain runs to 375 residues: Carbamoyl phosphate synthase small chain (375 aa).

The CPSase stretch occupies residues 1-185 (MTQPAILVLE…LNANAFVQAE (185 aa)). L-glutamine contacts are provided by Ser47, Gly237, and Gly239. In terms of domain architecture, Glutamine amidotransferase type-1 spans 189–375 (KVVAYDYGVK…FVASMAEAKS (187 aa)). The Nucleophile role is filled by Cys265. L-glutamine-binding residues include Leu266, Gln269, Asn307, Gly309, and Phe310. Active-site residues include His349 and Glu351.

This sequence belongs to the CarA family. As to quaternary structure, composed of two chains; the small (or glutamine) chain promotes the hydrolysis of glutamine to ammonia, which is used by the large (or ammonia) chain to synthesize carbamoyl phosphate. Tetramer of heterodimers (alpha,beta)4.

The catalysed reaction is hydrogencarbonate + L-glutamine + 2 ATP + H2O = carbamoyl phosphate + L-glutamate + 2 ADP + phosphate + 2 H(+). It carries out the reaction L-glutamine + H2O = L-glutamate + NH4(+). Its pathway is amino-acid biosynthesis; L-arginine biosynthesis; carbamoyl phosphate from bicarbonate: step 1/1. The protein operates within pyrimidine metabolism; UMP biosynthesis via de novo pathway; (S)-dihydroorotate from bicarbonate: step 1/3. Its function is as follows. Small subunit of the glutamine-dependent carbamoyl phosphate synthetase (CPSase). CPSase catalyzes the formation of carbamoyl phosphate from the ammonia moiety of glutamine, carbonate, and phosphate donated by ATP, constituting the first step of 2 biosynthetic pathways, one leading to arginine and/or urea and the other to pyrimidine nucleotides. The small subunit (glutamine amidotransferase) binds and cleaves glutamine to supply the large subunit with the substrate ammonia. This chain is Carbamoyl phosphate synthase small chain, found in Xanthomonas campestris pv. campestris (strain ATCC 33913 / DSM 3586 / NCPPB 528 / LMG 568 / P 25).